The primary structure comprises 284 residues: MSGLRTLLGLGLLVSSSRFPRVVARGGPRCPGPAWWAARPMHLGDSTMAGGTVKYLSQEEAQAVDEELFNEYKFSVDQLMELAGLSCATAIAKAYPLSSFGSNPPAVLVICGPGNNGGDGLVCARHLKLFGYEPKIHYPKKPNKPLFDALVTQCQKMDIPFLPEVPPEPMLIDELYELVVDAIFGFSFKGAVREPFGTILSIMNGLTVPIASIDIPSGWDVEKGNPEGIRPDLLISLTAPKKAATLFKGRHHYLGGRFVPSDLEKKYQLNLPPYPGTDCVLQLQ.

The N-terminal 55 residues, 1 to 55 (MSGLRTLLGLGLLVSSSRFPRVVARGGPRCPGPAWWAARPMHLGDSTMAGGTVKY), are a transit peptide targeting the mitochondrion. One can recognise a YjeF N-terminal domain in the interval 61–271 (AQAVDEELFN…DLEKKYQLNL (211 aa)). A (6S)-NADPHX-binding site is contributed by 115-119 (NNGGD). K(+) is bound at residue asparagine 116. The residue at position 140 (lysine 140) is an N6-succinyllysine. Residue aspartate 181 participates in K(+) binding. Residues 185-191 (GFSFKGA) and aspartate 214 contribute to the (6S)-NADPHX site. Serine 217 serves as a coordination point for K(+).

The protein belongs to the NnrE/AIBP family. Homodimer. Interacts with APOA1 and APOA2. K(+) is required as a cofactor. In terms of processing, undergoes physiological phosphorylation during sperm capacitation, downstream to PKA activation.

The protein localises to the mitochondrion. It localises to the secreted. It catalyses the reaction (6R)-NADHX = (6S)-NADHX. It carries out the reaction (6R)-NADPHX = (6S)-NADPHX. Functionally, catalyzes the epimerization of the S- and R-forms of NAD(P)HX, a damaged form of NAD(P)H that is a result of enzymatic or heat-dependent hydration. This is a prerequisite for the S-specific NAD(P)H-hydrate dehydratase to allow the repair of both epimers of NAD(P)HX. Accelerates cholesterol efflux from endothelial cells to high-density lipoprotein (HDL) and thereby regulates angiogenesis. The polypeptide is NAD(P)H-hydrate epimerase (Monodelphis domestica (Gray short-tailed opossum)).